The sequence spans 256 residues: DNA repair protein RecO (256 aa).

This sequence belongs to the RecO family.

Its function is as follows. Involved in DNA repair and RecF pathway recombination. The chain is DNA repair protein RecO from Streptococcus equi subsp. zooepidemicus (strain MGCS10565).